A 463-amino-acid polypeptide reads, in one-letter code: MRAGAGAAGESCKDDGVRPDDVSRLTADAVVRRVALLAVHTSPLAQPGTGDAGGMNVYVLQSALHLAKRGIEVEIFTRATASADPPVVRVAPGVLVRNVVAGPFEGLDKYDLPTQLCAFAAGVLRAEAAHEPGHYDIVHSHYWLSGQVGWLARDRWAVPLVHTAHTLAAVKNAALANGDAPEPPLRTVGEQQVVDEADRLIVNTDDEAKQLISIHHADPARIDVVHPGVDLEVFRPGDRQQARTALGLRPEEKVVAFVGRIQPLKAPDIVLRAVAKLPGVRIIVAGGPSGSGLASPDGLAQLADELGIAERVTFLPPQSRTDLARVFHAVDLVAIPSYSESFGLVAVEAQACGTRVVAAAVGGLPVAVRDGVSGTLVSGHDVDQWAAAIDGLLRSNAGAQGALMSRAAAEHAATFSWENTTDALLASYRRAIGDFTAGRRRKVRDPVAARKPRRWTARRGVGA.

His-40 contributes to the 1D-myo-inositol 3-phosphate binding site. UDP-N-acetyl-alpha-D-glucosamine is bound by residues Gln-46–Pro-47 and Gly-54. 1D-myo-inositol 3-phosphate-binding positions include Asp-51–Asn-56, Lys-109, Tyr-142, Thr-166, and Arg-186. Arg-260, Lys-265, and Gln-318 together coordinate UDP-N-acetyl-alpha-D-glucosamine. Mg(2+) is bound by residues Phe-327, His-328, and Val-330. UDP-N-acetyl-alpha-D-glucosamine contacts are provided by Glu-340 and Glu-348. Thr-354 is a Mg(2+) binding site. The disordered stretch occupies residues Val-443–Ala-463.

This sequence belongs to the glycosyltransferase group 1 family. MshA subfamily. In terms of assembly, homodimer.

It carries out the reaction 1D-myo-inositol 3-phosphate + UDP-N-acetyl-alpha-D-glucosamine = 1D-myo-inositol 2-acetamido-2-deoxy-alpha-D-glucopyranoside 3-phosphate + UDP + H(+). Its function is as follows. Catalyzes the transfer of a N-acetyl-glucosamine moiety to 1D-myo-inositol 3-phosphate to produce 1D-myo-inositol 2-acetamido-2-deoxy-glucopyranoside 3-phosphate in the mycothiol biosynthesis pathway. This is D-inositol 3-phosphate glycosyltransferase from Mycobacterium ulcerans (strain Agy99).